Reading from the N-terminus, the 216-residue chain is 3-isopropylmalate dehydratase small subunit (216 aa).

This sequence belongs to the LeuD family. LeuD type 1 subfamily. As to quaternary structure, heterodimer of LeuC and LeuD.

It catalyses the reaction (2R,3S)-3-isopropylmalate = (2S)-2-isopropylmalate. It participates in amino-acid biosynthesis; L-leucine biosynthesis; L-leucine from 3-methyl-2-oxobutanoate: step 2/4. Functionally, catalyzes the isomerization between 2-isopropylmalate and 3-isopropylmalate, via the formation of 2-isopropylmaleate. This is 3-isopropylmalate dehydratase small subunit from Marinomonas sp. (strain MWYL1).